Reading from the N-terminus, the 156-residue chain is Putative HTH-type transcriptional regulator YwgB (156 aa).

The 132-residue stretch at 2-133 folds into the HTH rrf2-type domain; that stretch reads KMKSGMEQAV…REESLQHVMD (132 aa).

The sequence is that of Putative HTH-type transcriptional regulator YwgB (ywgB) from Bacillus subtilis (strain 168).